Consider the following 68-residue polypeptide: Neuronal regeneration-related protein (68 aa).

A disordered region spans residues 22–54; the sequence is EGRLPKGRLPVPKEVNRKKNDETNAASLTPLGS. The span at 44-54 shows a compositional bias: polar residues; the sequence is TNAASLTPLGS. Serine 59 carries the post-translational modification Phosphoserine.

Interacts with the latency-associated peptides (LAP) of TGFB1 and TGFB2; the interaction results in a decrease in TGFB autoinduction. Interacts with FLNA. Phosphorylated on Ser-59. Phosphorylation decreases stability and activity. In terms of tissue distribution, expressed in lung (at protein level).

The protein localises to the cytoplasm. Functionally, may have roles in neural function. Ectopic expression augments motility of gliomas. Also promotes axonal regeneration. May also have functions in cellular differentiation. Induces differentiation of fibroblast into myofibroblast and myofibroblast ameboid migration. Increases retinoic-acid regulation of lipid-droplet biogenesis. Down-regulates the expression of TGFB1 and TGFB2 but not of TGFB3. May play a role in the regulation of alveolar generation. The chain is Neuronal regeneration-related protein (NREP) from Homo sapiens (Human).